Reading from the N-terminus, the 262-residue chain is MILDDIVRDKKLQLIEDKKALSLDDIKSKLNSLNLDKRNFKEALEKENISIIAEIKKASPSKGVIREDFNPVKIGQIYENINIDAVSILTEKKYFLGKNEYIKIVKEVNSKPILRKDFIVDEYQLYEAKLIGADAVLLIAAVLKDKLECFYNRTLELGLDSITEVHNEEEAKLASEIGCSIIGINNRDLRDFSTDITTTKRLMKYVPRDRIIVSESSIKTPEDILYLRSIGVNAVLIGETFMRNIDDLKGINEFLKKAKDNG.

This sequence belongs to the TrpC family.

The catalysed reaction is 1-(2-carboxyphenylamino)-1-deoxy-D-ribulose 5-phosphate + H(+) = (1S,2R)-1-C-(indol-3-yl)glycerol 3-phosphate + CO2 + H2O. It functions in the pathway amino-acid biosynthesis; L-tryptophan biosynthesis; L-tryptophan from chorismate: step 4/5. In Clostridium acetobutylicum (strain ATCC 824 / DSM 792 / JCM 1419 / IAM 19013 / LMG 5710 / NBRC 13948 / NRRL B-527 / VKM B-1787 / 2291 / W), this protein is Indole-3-glycerol phosphate synthase.